The primary structure comprises 1066 residues: Vinculin (1066 aa).

Residues Met1–Phe835 form an N-terminal globular head region. The residue at position 97 (Ser97) is a Phosphoserine. A talin-interaction region spans residues Met168–Ala208. Lys173 carries the post-translational modification N6-acetyllysine. Repeat copies occupy residues Ala259–Asn369, Ala370–Arg479, and Ala480–Glu589. Residues Ala259–Glu589 are 3 X 112 AA tandem repeats. Phosphoserine occurs at positions 260, 272, 275, 290, 346, and 434. At Lys496 the chain carries N6-acetyllysine. Tyr537 bears the Phosphotyrosine mark. 3 positions are modified to phosphoserine: Ser574, Ser579, and Ser600. Phosphothreonine is present on residues Thr604 and Thr672. Phosphoserine is present on Ser721. The interval Met741–Leu764 is interaction with ACTN4. A phosphoserine mark is found at Ser795 and Ser809. The residue at position 822 (Tyr822) is a Phosphotyrosine. Positions Gln836–Pro878 are linker (Pro-rich). The tract at residues Glu857–Glu887 is disordered. The span at Pro860–Pro876 shows a compositional bias: pro residues. The segment at Glu879–Gln1066 is C-terminal tail. 2 facilitates phospholipid membrane insertion regions span residues Arg935–Arg978 and Ala1052–Gln1066. Tyr1065 carries the post-translational modification Phosphotyrosine; by SRC-type Tyr-kinases.

It belongs to the vinculin/alpha-catenin family. As to quaternary structure, exhibits self-association properties. Part of a complex composed of THSD1, PTK2/FAK1, TLN1 and VCL. Interacts with APBB1IP, NRAP and TLN1. Interacts with CTNNB1 and this interaction is necessary for its localization to the cell-cell junctions and for its function in regulating cell surface expression of E-cadherin. Interacts with SORBS1. Interacts with SYNM. Interacts with CTNNA1. Binds to ACTN4; this interaction triggers conformational changes. Interacts with FLII. Post-translationally, phosphorylated; on serines, threonines and tyrosines. Phosphorylation on Tyr-1065 in activated platelets affects head-tail interactions and cell spreading but has no effect on actin binding nor on localization to focal adhesion plaques. Acetylated; mainly by myristic acid but also by a small amount of palmitic acid.

Its subcellular location is the cell membrane. It localises to the cell junction. The protein localises to the adherens junction. The protein resides in the focal adhesion. It is found in the cytoplasm. Its subcellular location is the cytoskeleton. It localises to the sarcolemma. The protein localises to the cell projection. The protein resides in the podosome. Functionally, actin filament (F-actin)-binding protein involved in cell-matrix adhesion and cell-cell adhesion. Regulates cell-surface E-cadherin expression and potentiates mechanosensing by the E-cadherin complex. May also play important roles in cell morphology and locomotion. The polypeptide is Vinculin (Rattus norvegicus (Rat)).